The primary structure comprises 388 residues: Succinate--CoA ligase [ADP-forming] subunit beta (388 aa).

In terms of domain architecture, ATP-grasp spans 9-244; that stretch reads KSLFAEYGLP…PSQDDAREAH (236 aa). Residues Lys-46, 53–55, Glu-99, Thr-102, and Glu-107 contribute to the ATP site; that span reads GRG. The Mg(2+) site is built by Asn-199 and Asp-213. Residues Asn-264 and 321–323 each bind substrate; that span reads GIV.

It belongs to the succinate/malate CoA ligase beta subunit family. Heterotetramer of two alpha and two beta subunits. Requires Mg(2+) as cofactor.

The enzyme catalyses succinate + ATP + CoA = succinyl-CoA + ADP + phosphate. It catalyses the reaction GTP + succinate + CoA = succinyl-CoA + GDP + phosphate. It functions in the pathway carbohydrate metabolism; tricarboxylic acid cycle; succinate from succinyl-CoA (ligase route): step 1/1. Functionally, succinyl-CoA synthetase functions in the citric acid cycle (TCA), coupling the hydrolysis of succinyl-CoA to the synthesis of either ATP or GTP and thus represents the only step of substrate-level phosphorylation in the TCA. The beta subunit provides nucleotide specificity of the enzyme and binds the substrate succinate, while the binding sites for coenzyme A and phosphate are found in the alpha subunit. In Shewanella putrefaciens (strain CN-32 / ATCC BAA-453), this protein is Succinate--CoA ligase [ADP-forming] subunit beta.